Reading from the N-terminus, the 510-residue chain is Bifunctional purine biosynthesis protein PurH (510 aa).

In terms of domain architecture, MGS-like spans 1-145; the sequence is MTKRALLSVS…KNFAAVLPIV (145 aa).

This sequence belongs to the PurH family.

The catalysed reaction is (6R)-10-formyltetrahydrofolate + 5-amino-1-(5-phospho-beta-D-ribosyl)imidazole-4-carboxamide = 5-formamido-1-(5-phospho-D-ribosyl)imidazole-4-carboxamide + (6S)-5,6,7,8-tetrahydrofolate. It catalyses the reaction IMP + H2O = 5-formamido-1-(5-phospho-D-ribosyl)imidazole-4-carboxamide. The protein operates within purine metabolism; IMP biosynthesis via de novo pathway; 5-formamido-1-(5-phospho-D-ribosyl)imidazole-4-carboxamide from 5-amino-1-(5-phospho-D-ribosyl)imidazole-4-carboxamide (10-formyl THF route): step 1/1. It functions in the pathway purine metabolism; IMP biosynthesis via de novo pathway; IMP from 5-formamido-1-(5-phospho-D-ribosyl)imidazole-4-carboxamide: step 1/1. The protein is Bifunctional purine biosynthesis protein PurH of Lactiplantibacillus plantarum (strain ATCC BAA-793 / NCIMB 8826 / WCFS1) (Lactobacillus plantarum).